A 306-amino-acid chain; its full sequence is Probable C-terminal domain small phosphatase (306 aa).

Polar residues predominate over residues 1 to 36 (MNSSPITQVSNPNDSLNHSSTNLIPSSHNSLNNYPQ). Disordered stretches follow at residues 1–45 (MNSS…NRKK) and 61–116 (NDQN…NKDS). The segment covering 61–111 (NDQNNGNNINTDNGASNNDKLQQQKQYNQQQQQQYNQHQQQQQQQQQQQQY) has biased composition (low complexity). Residues 132–290 (RHVGLKTLVL…LDLLPLLDDL (159 aa)) form the FCP1 homology domain. The active-site 4-aspartylphosphate intermediate is Asp-142. 3 residues coordinate Mg(2+): Asp-142, Asp-144, and Asn-253. The active-site Proton donor is Asp-144.

Monomer. It depends on Mg(2+) as a cofactor.

It localises to the nucleus. The catalysed reaction is O-phospho-L-seryl-[protein] + H2O = L-seryl-[protein] + phosphate. It carries out the reaction O-phospho-L-threonyl-[protein] + H2O = L-threonyl-[protein] + phosphate. Its function is as follows. May function as a phosphatase involved in the regulation of cell growth and differentiation. In Dictyostelium discoideum (Social amoeba), this protein is Probable C-terminal domain small phosphatase (fcpA).